Here is a 166-residue protein sequence, read N- to C-terminus: Peptide deformylase (166 aa).

The Fe cation site is built by cysteine 88 and histidine 130. The active site involves glutamate 131. A Fe cation-binding site is contributed by histidine 134.

The protein belongs to the polypeptide deformylase family. It depends on Fe(2+) as a cofactor.

The enzyme catalyses N-terminal N-formyl-L-methionyl-[peptide] + H2O = N-terminal L-methionyl-[peptide] + formate. Its function is as follows. Removes the formyl group from the N-terminal Met of newly synthesized proteins. Requires at least a dipeptide for an efficient rate of reaction. N-terminal L-methionine is a prerequisite for activity but the enzyme has broad specificity at other positions. The chain is Peptide deformylase from Caldicellulosiruptor bescii (strain ATCC BAA-1888 / DSM 6725 / KCTC 15123 / Z-1320) (Anaerocellum thermophilum).